Here is a 403-residue protein sequence, read N- to C-terminus: Ribosomal RNA large subunit methyltransferase I (403 aa).

The PUA domain maps to 9-88; it reads YPRLVLSKGR…ESIDIAFFTR (80 aa).

This sequence belongs to the methyltransferase superfamily. RlmI family.

The protein localises to the cytoplasm. The enzyme catalyses cytidine(1962) in 23S rRNA + S-adenosyl-L-methionine = 5-methylcytidine(1962) in 23S rRNA + S-adenosyl-L-homocysteine + H(+). Its function is as follows. Specifically methylates the cytosine at position 1962 (m5C1962) of 23S rRNA. The chain is Ribosomal RNA large subunit methyltransferase I from Salmonella typhi.